Here is a 365-residue protein sequence, read N- to C-terminus: Aminomethyltransferase (365 aa).

The protein belongs to the GcvT family. In terms of assembly, the glycine cleavage system is composed of four proteins: P, T, L and H.

It carries out the reaction N(6)-[(R)-S(8)-aminomethyldihydrolipoyl]-L-lysyl-[protein] + (6S)-5,6,7,8-tetrahydrofolate = N(6)-[(R)-dihydrolipoyl]-L-lysyl-[protein] + (6R)-5,10-methylene-5,6,7,8-tetrahydrofolate + NH4(+). Functionally, the glycine cleavage system catalyzes the degradation of glycine. This chain is Aminomethyltransferase, found in Chlorobium phaeobacteroides (strain DSM 266 / SMG 266 / 2430).